Here is a 292-residue protein sequence, read N- to C-terminus: MNKKFKCIGIVGHPRHPEALATHEMLYHWLKSKGYSVIIDRQVAKDIGLKDAQTGGLTEIGKQADLAVVVGGDGNMLGAARVLSRYDIKVIGINRGNLGFLTDLDPDNALQQLSEVLDGEYRNEHRFLLEAQVRRNGQKPRISTAINEVVLHPGKVAHMIEFEVYIDERFAFSQRSDGLIIATPTGSTAYSLSAGGPILTPNLDAIVLVPMFPHTLSSRPLVISSESSIRLKFSQNSNDYEVSCDSQIVLPIQDGEDVIISRSKQKLNLIHPQDYNYFNTLSTKLSWSKKMF.

D73 acts as the Proton acceptor in catalysis. NAD(+) contacts are provided by residues 73-74 (DG), 147-148 (NE), H158, R175, D177, 188-193 (TAYSLS), and Q247.

It belongs to the NAD kinase family. The cofactor is a divalent metal cation.

The protein localises to the cytoplasm. It catalyses the reaction NAD(+) + ATP = ADP + NADP(+) + H(+). Involved in the regulation of the intracellular balance of NAD and NADP, and is a key enzyme in the biosynthesis of NADP. Catalyzes specifically the phosphorylation on 2'-hydroxyl of the adenosine moiety of NAD to yield NADP. The sequence is that of NAD kinase from Photorhabdus laumondii subsp. laumondii (strain DSM 15139 / CIP 105565 / TT01) (Photorhabdus luminescens subsp. laumondii).